The primary structure comprises 469 residues: Argininosuccinate lyase (469 aa).

The protein belongs to the lyase 1 family. Argininosuccinate lyase subfamily.

It localises to the cytoplasm. The enzyme catalyses 2-(N(omega)-L-arginino)succinate = fumarate + L-arginine. Its pathway is amino-acid biosynthesis; L-arginine biosynthesis; L-arginine from L-ornithine and carbamoyl phosphate: step 3/3. This is Argininosuccinate lyase from Novosphingobium aromaticivorans (strain ATCC 700278 / DSM 12444 / CCUG 56034 / CIP 105152 / NBRC 16084 / F199).